The following is a 295-amino-acid chain: Phosphatidylserine decarboxylase proenzyme (295 aa).

Residues Asp-113, His-169, and Ser-256 each act as charge relay system; for autoendoproteolytic cleavage activity in the active site. Ser-256 acts as the Schiff-base intermediate with substrate; via pyruvic acid; for decarboxylase activity in catalysis. Pyruvic acid (Ser); by autocatalysis is present on Ser-256.

This sequence belongs to the phosphatidylserine decarboxylase family. PSD-B subfamily. Prokaryotic type II sub-subfamily. Heterodimer of a large membrane-associated beta subunit and a small pyruvoyl-containing alpha subunit. The cofactor is pyruvate. In terms of processing, is synthesized initially as an inactive proenzyme. Formation of the active enzyme involves a self-maturation process in which the active site pyruvoyl group is generated from an internal serine residue via an autocatalytic post-translational modification. Two non-identical subunits are generated from the proenzyme in this reaction, and the pyruvate is formed at the N-terminus of the alpha chain, which is derived from the carboxyl end of the proenzyme. The autoendoproteolytic cleavage occurs by a canonical serine protease mechanism, in which the side chain hydroxyl group of the serine supplies its oxygen atom to form the C-terminus of the beta chain, while the remainder of the serine residue undergoes an oxidative deamination to produce ammonia and the pyruvoyl prosthetic group on the alpha chain. During this reaction, the Ser that is part of the protease active site of the proenzyme becomes the pyruvoyl prosthetic group, which constitutes an essential element of the active site of the mature decarboxylase.

The protein localises to the cell membrane. It catalyses the reaction a 1,2-diacyl-sn-glycero-3-phospho-L-serine + H(+) = a 1,2-diacyl-sn-glycero-3-phosphoethanolamine + CO2. It functions in the pathway phospholipid metabolism; phosphatidylethanolamine biosynthesis; phosphatidylethanolamine from CDP-diacylglycerol: step 2/2. Catalyzes the formation of phosphatidylethanolamine (PtdEtn) from phosphatidylserine (PtdSer). This is Phosphatidylserine decarboxylase proenzyme from Clostridium botulinum (strain Langeland / NCTC 10281 / Type F).